Here is a 101-residue protein sequence, read N- to C-terminus: Urease subunit beta (101 aa).

Belongs to the urease beta subunit family. In terms of assembly, heterotrimer of UreA (gamma), UreB (beta) and UreC (alpha) subunits. Three heterotrimers associate to form the active enzyme.

The protein localises to the cytoplasm. It catalyses the reaction urea + 2 H2O + H(+) = hydrogencarbonate + 2 NH4(+). It functions in the pathway nitrogen metabolism; urea degradation; CO(2) and NH(3) from urea (urease route): step 1/1. In Pseudomonas syringae pv. syringae (strain B728a), this protein is Urease subunit beta.